We begin with the raw amino-acid sequence, 137 residues long: Large ribosomal subunit protein uL16 (137 aa).

Residues 1 to 13 (MLQPKRRKYRKEQ) are compositionally biased toward basic residues. Residues 1–22 (MLQPKRRKYRKEQKGRNTGVAT) form a disordered region.

Belongs to the universal ribosomal protein uL16 family. Part of the 50S ribosomal subunit.

Binds 23S rRNA and is also seen to make contacts with the A and possibly P site tRNAs. The chain is Large ribosomal subunit protein uL16 from Polynucleobacter asymbioticus (strain DSM 18221 / CIP 109841 / QLW-P1DMWA-1) (Polynucleobacter necessarius subsp. asymbioticus).